The following is a 61-amino-acid chain: Large ribosomal subunit protein eL20 (61 aa).

Belongs to the eukaryotic ribosomal protein eL20 family. In terms of assembly, part of the 50S ribosomal subunit. Binds 23S rRNA.

The protein is Large ribosomal subunit protein eL20 of Methanosarcina mazei (strain ATCC BAA-159 / DSM 3647 / Goe1 / Go1 / JCM 11833 / OCM 88) (Methanosarcina frisia).